Reading from the N-terminus, the 685-residue chain is Threonine--tRNA ligase (685 aa).

The disordered stretch occupies residues 1–28 (MTSPAPEHSAAPLRVPAGTTAGTAVREA). The TGS domain maps to 1-65 (MTSPAPEHSA…EVDVDVEPVA (65 aa)). Positions 262-568 (DHRKLGTELD…LTEHYAGAFP (307 aa)) are catalytic. The Zn(2+) site is built by Cys367, His418, and His545.

This sequence belongs to the class-II aminoacyl-tRNA synthetase family. As to quaternary structure, homodimer. Requires Zn(2+) as cofactor.

The protein localises to the cytoplasm. The enzyme catalyses tRNA(Thr) + L-threonine + ATP = L-threonyl-tRNA(Thr) + AMP + diphosphate + H(+). Catalyzes the attachment of threonine to tRNA(Thr) in a two-step reaction: L-threonine is first activated by ATP to form Thr-AMP and then transferred to the acceptor end of tRNA(Thr). Also edits incorrectly charged L-seryl-tRNA(Thr). The sequence is that of Threonine--tRNA ligase from Rhodococcus erythropolis (strain PR4 / NBRC 100887).